A 453-amino-acid chain; its full sequence is Protein ECM18 (453 aa).

The AB hydrolase-1 domain occupies 130–435 (LLIHGYAASS…SGHNLFLDNP (306 aa)). The short motif at 428–433 (HNLFLD) is the HXXXXD motif element.

The protein belongs to the peptidase S33 family. ABHD4/ABHD5 subfamily.

The protein localises to the mitochondrion. Functionally, may be involved in cell wall organization and biogenesis. The sequence is that of Protein ECM18 (ECM18) from Saccharomyces cerevisiae (strain ATCC 204508 / S288c) (Baker's yeast).